We begin with the raw amino-acid sequence, 222 residues long: 7-carboxy-7-deazaguanine synthase (222 aa).

Substrate contacts are provided by residues 16–18 (LQG) and Arg-31. In terms of domain architecture, Radical SAM core spans 22-222 (NLGRPAVFVR…IMAWGNARGK (201 aa)). [4Fe-4S] cluster-binding residues include Cys-35, Cys-39, and Cys-42. A Mg(2+)-binding site is contributed by Thr-44. Thr-77 is a binding site for substrate. Residues Gly-79 and 126-128 (SPK) contribute to the S-adenosyl-L-methionine site.

Belongs to the radical SAM superfamily. 7-carboxy-7-deazaguanine synthase family. Homodimer. It depends on [4Fe-4S] cluster as a cofactor. S-adenosyl-L-methionine serves as cofactor. Requires Mg(2+) as cofactor.

The enzyme catalyses 6-carboxy-5,6,7,8-tetrahydropterin + H(+) = 7-carboxy-7-deazaguanine + NH4(+). It functions in the pathway purine metabolism; 7-cyano-7-deazaguanine biosynthesis. In terms of biological role, catalyzes the complex heterocyclic radical-mediated conversion of 6-carboxy-5,6,7,8-tetrahydropterin (CPH4) to 7-carboxy-7-deazaguanine (CDG), a step common to the biosynthetic pathways of all 7-deazapurine-containing compounds. The chain is 7-carboxy-7-deazaguanine synthase from Pyrobaculum aerophilum (strain ATCC 51768 / DSM 7523 / JCM 9630 / CIP 104966 / NBRC 100827 / IM2).